The chain runs to 357 residues: tRNA N6-adenosine threonylcarbamoyltransferase (357 aa).

2 residues coordinate Fe cation: His-116 and His-120. Substrate contacts are provided by residues 139–143 (LVSGG), Asp-172, Gly-185, and Asn-284. Residue Asp-312 coordinates Fe cation.

This sequence belongs to the KAE1 / TsaD family. It depends on Fe(2+) as a cofactor.

The protein localises to the cytoplasm. It catalyses the reaction L-threonylcarbamoyladenylate + adenosine(37) in tRNA = N(6)-L-threonylcarbamoyladenosine(37) in tRNA + AMP + H(+). Its function is as follows. Required for the formation of a threonylcarbamoyl group on adenosine at position 37 (t(6)A37) in tRNAs that read codons beginning with adenine. Is involved in the transfer of the threonylcarbamoyl moiety of threonylcarbamoyl-AMP (TC-AMP) to the N6 group of A37, together with TsaE and TsaB. TsaD likely plays a direct catalytic role in this reaction. This Synechococcus sp. (strain CC9605) protein is tRNA N6-adenosine threonylcarbamoyltransferase.